Reading from the N-terminus, the 256-residue chain is MPLSRALILGVLALTTMLSPCGGQDDIEADHVGSYGITVYQYHESKGQYTHEFDGDERFYVDLDKKETIWRIPEFGQLISFDPQGALRNIAIIKHNLEILMKRSNSTPAVNEVPEATVFSKSPVLLGQPNTLICFVDNIFPPVINITWLRNSKPLTEGVYETSFLINSDYSFHKMAYLTFIPSNDDIYDCKVEHWSLDEPVLRHWEPEIPAPMSELTETVVCALGLSVGLVGIVVGTIFIIQGLRSVAPSRHPGPL.

An N-terminal signal peptide occupies residues 1-23; that stretch reads MPLSRALILGVLALTTMLSPCGG. The tract at residues 24–111 is alpha-1; sequence QDDIEADHVG…KRSNSTPAVN (88 aa). The Extracellular portion of the chain corresponds to 24 to 218; it reads QDDIEADHVG…IPAPMSELTE (195 aa). One can recognise an Ig-like C1-type domain in the interval 108 to 206; it reads PAVNEVPEAT…LDEPVLRHWE (99 aa). Residues 112 to 205 are alpha-2; that stretch reads EVPEATVFSK…SLDEPVLRHW (94 aa). Residues Cys-134 and Cys-190 are joined by a disulfide bond. N-linked (GlcNAc...) asparagine glycosylation is present at Asn-145. Positions 206-218 are connecting peptide; sequence EPEIPAPMSELTE. A helical membrane pass occupies residues 219 to 244; it reads TVVCALGLSVGLVGIVVGTIFIIQGL. The Cytoplasmic portion of the chain corresponds to 245 to 256; the sequence is RSVAPSRHPGPL.

It belongs to the MHC class II family.

The protein resides in the membrane. This chain is Rano class II histocompatibility antigen, B alpha chain (RT1-Ba), found in Rattus norvegicus (Rat).